We begin with the raw amino-acid sequence, 129 residues long: Small ribosomal subunit protein uS11 (129 aa).

This sequence belongs to the universal ribosomal protein uS11 family. As to quaternary structure, part of the 30S ribosomal subunit. Interacts with proteins S7 and S18. Binds to IF-3.

Located on the platform of the 30S subunit, it bridges several disparate RNA helices of the 16S rRNA. Forms part of the Shine-Dalgarno cleft in the 70S ribosome. The sequence is that of Small ribosomal subunit protein uS11 from Paracoccus denitrificans (strain Pd 1222).